A 73-amino-acid chain; its full sequence is Disintegrin lutosin (73 aa).

The Disintegrin domain occupies 1–73 (EAGEECDCGS…ADCPRNGLYG (73 aa)). Cystine bridges form between C6-C21, C8-C16, C15-C38, C29-C35, C34-C59, and C47-C66. Residues 51–53 (RGD) carry the Cell attachment site motif.

Belongs to the venom metalloproteinase (M12B) family. P-II subfamily. P-IIa sub-subfamily. As to quaternary structure, monomer (disintegrin). Expressed by the venom gland.

It is found in the secreted. Inhibits fibrinogen interaction with platelets. Acts by binding to alpha-IIb/beta-3 (ITGA2B/ITGB3) on the platelet surface and inhibits aggregation induced by ADP, thrombin, platelet-activating factor and collagen. This is Disintegrin lutosin from Crotalus lutosus (Great basin rattlesnake).